Consider the following 347-residue polypeptide: Dolichyl-diphosphooligosaccharide--protein glycosyltransferase subunit TUSC3 (347 aa).

Positions 1 to 41 are cleaved as a signal peptide; that stretch reads MSARAAPSRRRQAGRRLRYLPTGSFPFLLLLLLLCIQLGGG. Residues 42–196 are Lumenal-facing; it reads QKKKENLLAE…DVHIRVFRPP (155 aa). The region spanning 59 to 187 is the Thioredoxin domain; the sequence is WSSRRSIFRM…LAKWIADRTD (129 aa). N-linked (GlcNAc...) asparagine glycosylation occurs at Asn-83. Cys-99 and Cys-102 form a disulfide bridge. Residues 197-217 traverse the membrane as a helical segment; sequence NYSGTIALALLVSLVGGLLYL. Topologically, residues 218-221 are cytoplasmic; it reads RRNN. A helical transmembrane segment spans residues 222–242; the sequence is LEFIYNKTGWAMVSLCIVFAM. Residues 243-276 are Lumenal-facing; sequence TSGQMWNHIRGPPYAHKNPHNGQVSYIHGSSQAQ. Residues 277–297 traverse the membrane as a helical segment; the sequence is FVAESHIILVLNAAITMGMVL. The Cytoplasmic portion of the chain corresponds to 298–312; the sequence is LNEAATSKGDVGKRR. Residues 313–333 form a helical membrane-spanning segment; that stretch reads IICLVGLGLVVFFFSFLLSIF. Topologically, residues 334 to 347 are lumenal; sequence RSKYHGYPYSFLIK.

The protein belongs to the OST3/OST6 family. In terms of assembly, accessory component of the STT3B-containing form of the oligosaccharyltransferase (OST) complex. OST exists in two different complex forms which contain common core subunits RPN1, RPN2, OST48, OST4, DAD1 and TMEM258, either STT3A or STT3B as catalytic subunits, and form-specific accessory subunits. OST can form stable complexes with the Sec61 complex or with both the Sec61 and TRAP complexes. The association of TUSC3 or MAGT1 with the STT3B-containing complex seems to be mutually exclusvice.

It is found in the endoplasmic reticulum membrane. Its pathway is protein modification; protein glycosylation. Its function is as follows. Acts as accessory component of the N-oligosaccharyl transferase (OST) complex which catalyzes the transfer of a high mannose oligosaccharide from a lipid-linked oligosaccharide donor to an asparagine residue within an Asn-X-Ser/Thr consensus motif in nascent polypeptide chains. Involved in N-glycosylation of STT3B-dependent substrates. Specifically required for the glycosylation of a subset of acceptor sites that are near cysteine residues; in this function seems to act redundantly with MAGT1. In its oxidized form proposed to form transient mixed disulfides with a glycoprotein substrate to facilitate access of STT3B to the unmodified acceptor site. Also has oxidoreductase-independent functions in the STT3B-containing OST complex possibly involving substrate recognition. Could indirectly play a role in Mg(2+) transport. This chain is Dolichyl-diphosphooligosaccharide--protein glycosyltransferase subunit TUSC3 (Tusc3), found in Mus musculus (Mouse).